Here is a 295-residue protein sequence, read N- to C-terminus: Peptide transport system permease protein SapC (295 aa).

The next 6 membrane-spanning stretches (helical) occupy residues 27-47 (IALF…FASY), 102-122 (LLVV…AGLL), 129-149 (FVGH…AVVI), 157-177 (LWNA…HTIY), 219-239 (VARA…ISLG), and 262-282 (PWTV…SIIF). An ABC transmembrane type-1 domain is found at 98-278 (LGSALLVVFS…GFAIIFTILL (181 aa)).

Belongs to the binding-protein-dependent transport system permease family. OppBC subfamily.

It localises to the cell inner membrane. Its function is as follows. Involved in a peptide intake transport system that plays a role in the resistance to antimicrobial peptides. The protein is Peptide transport system permease protein SapC (sapC) of Haemophilus influenzae (strain ATCC 51907 / DSM 11121 / KW20 / Rd).